An 893-amino-acid chain; its full sequence is Translation initiation factor IF-2 (893 aa).

The tract at residues 1–266 (MVDTKNPGDK…AKPAPSKQRG (266 aa)) is disordered. Residues 59-70 (PADAPTAAAAAP) show a composition bias toward low complexity. A compositionally biased stretch (pro residues) spans 71–92 (APAPAPVPSAAPRPAAPPPPSR). The span at 93–104 (PQQSRSQSPSRS) shows a compositional bias: low complexity. Basic and acidic residues-rich tracts occupy residues 128–148 (ARVR…RRNS) and 155–196 (AERE…EAKR). The segment covering 197–226 (PAAAATPAKSATPAARPTGAPAVRAPGVAA) has biased composition (low complexity). In terms of domain architecture, tr-type G spans 389 to 560 (PRSPVVTVMG…ALQAELLDLK (172 aa)). The segment at 398-405 (GHVDHGKT) is G1. 398 to 405 (GHVDHGKT) lines the GTP pocket. Residues 423–427 (GITQH) are G2. Positions 446–449 (DTPG) are G3. GTP contacts are provided by residues 446 to 450 (DTPGH) and 500 to 503 (NKID). The tract at residues 500–503 (NKID) is G4. The interval 536–538 (SAK) is G5.

The protein belongs to the TRAFAC class translation factor GTPase superfamily. Classic translation factor GTPase family. IF-2 subfamily.

It localises to the cytoplasm. One of the essential components for the initiation of protein synthesis. Protects formylmethionyl-tRNA from spontaneous hydrolysis and promotes its binding to the 30S ribosomal subunits. Also involved in the hydrolysis of GTP during the formation of the 70S ribosomal complex. The polypeptide is Translation initiation factor IF-2 (Rhodopseudomonas palustris (strain BisA53)).